The primary structure comprises 289 residues: MKEYKDLLKLVLDNGIMQENRTDTDAIAYFGTQSRYDLTKGFPLLTTKKMAYKAIFHELLWFLKGETNIKYLVDNNVKIWNEWPYENYKKSPYFKNESIDEFILKIKEDDSFAKQFGELGPVYGRQWRNFNGVDQITNLIEEIKKNKYSRRLIVSVWNPSEIKNMLLPPCHCLFQFFVNSKNELSCQLYQRSADLFLGVPFNIASYSLLTYMIAQVTNTTAKEFVHTIGVAHIYNNHIDQVKEQLTREPLQLPTLVLNKNIKNIFDFKIEDIEIKDYNSHPAIKGKVAV.

Residues arginine 21 and 150–151 (RR) contribute to the dUMP site. The Nucleophile role is filled by cysteine 170. DUMP contacts are provided by residues 191 to 194 (RSAD), asparagine 202, and 232 to 234 (HIY). Residue aspartate 194 participates in (6R)-5,10-methylene-5,6,7,8-tetrahydrofolate binding. Alanine 288 is a binding site for (6R)-5,10-methylene-5,6,7,8-tetrahydrofolate.

It belongs to the thymidylate synthase family. Bacterial-type ThyA subfamily. Homodimer.

Its subcellular location is the cytoplasm. The catalysed reaction is dUMP + (6R)-5,10-methylene-5,6,7,8-tetrahydrofolate = 7,8-dihydrofolate + dTMP. It functions in the pathway pyrimidine metabolism; dTTP biosynthesis. Catalyzes the reductive methylation of 2'-deoxyuridine-5'-monophosphate (dUMP) to 2'-deoxythymidine-5'-monophosphate (dTMP) while utilizing 5,10-methylenetetrahydrofolate (mTHF) as the methyl donor and reductant in the reaction, yielding dihydrofolate (DHF) as a by-product. This enzymatic reaction provides an intracellular de novo source of dTMP, an essential precursor for DNA biosynthesis. The sequence is that of Thymidylate synthase from Malacoplasma penetrans (strain HF-2) (Mycoplasma penetrans).